A 594-amino-acid chain; its full sequence is DNA ligase (594 aa).

Residues 32-36 (DEEYD), 81-82 (SL), and glutamate 118 contribute to the NAD(+) site. Catalysis depends on lysine 120, which acts as the N6-AMP-lysine intermediate. NAD(+) is bound by residues arginine 141, glutamate 181, lysine 299, and lysine 323. 4 residues coordinate Zn(2+): cysteine 417, cysteine 420, cysteine 436, and cysteine 442.

This sequence belongs to the NAD-dependent DNA ligase family. LigA subfamily. It depends on Mg(2+) as a cofactor. Mn(2+) is required as a cofactor.

The enzyme catalyses NAD(+) + (deoxyribonucleotide)n-3'-hydroxyl + 5'-phospho-(deoxyribonucleotide)m = (deoxyribonucleotide)n+m + AMP + beta-nicotinamide D-nucleotide.. Functionally, DNA ligase that catalyzes the formation of phosphodiester linkages between 5'-phosphoryl and 3'-hydroxyl groups in double-stranded DNA using NAD as a coenzyme and as the energy source for the reaction. It is essential for DNA replication and repair of damaged DNA. This chain is DNA ligase, found in Blochmanniella floridana.